A 608-amino-acid polypeptide reads, in one-letter code: Fatty acid amide hydrolase (608 aa).

Catalysis depends on charge relay system residues lysine 206 and serine 282. 303-306 provides a ligand contact to substrate; the sequence is GGGS. Serine 306 acts as the Acyl-ester intermediate in catalysis.

It belongs to the amidase family. In terms of assembly, forms homodimers.

The protein localises to the endoplasmic reticulum membrane. It is found in the cell membrane. It carries out the reaction N-(9Z,12Z-octadecadienoyl)-ethanolamine + H2O = ethanolamine + (9Z,12Z)-octadecadienoate. It catalyses the reaction N-hexadecanoylethanolamine + H2O = ethanolamine + hexadecanoate. The catalysed reaction is N-dodecanoylethanolamine + H2O = dodecanoate + ethanolamine. With respect to regulation, inhibited by methyl arachidonyl fluorophosphonate (MAFP). Catalyzes the hydrolysis of bioactive endogenous fatty acid amides to their corresponding acids. The hydrolysis of endogenous amidated lipids terminates their participation as lipid mediators in various signaling systems. Converts a wide range of N-acylethanolamines (NAEs) to their corresponding free fatty acids and ethanolamine. This chain is Fatty acid amide hydrolase, found in Oryza sativa subsp. indica (Rice).